The following is a 287-amino-acid chain: Phosphatidylserine decarboxylase proenzyme (287 aa).

Residues D90, H147, and S253 each act as charge relay system; for autoendoproteolytic cleavage activity in the active site. S253 functions as the Schiff-base intermediate with substrate; via pyruvic acid; for decarboxylase activity in the catalytic mechanism. Residue S253 is modified to Pyruvic acid (Ser); by autocatalysis.

The protein belongs to the phosphatidylserine decarboxylase family. PSD-B subfamily. Prokaryotic type I sub-subfamily. Heterodimer of a large membrane-associated beta subunit and a small pyruvoyl-containing alpha subunit. It depends on pyruvate as a cofactor. In terms of processing, is synthesized initially as an inactive proenzyme. Formation of the active enzyme involves a self-maturation process in which the active site pyruvoyl group is generated from an internal serine residue via an autocatalytic post-translational modification. Two non-identical subunits are generated from the proenzyme in this reaction, and the pyruvate is formed at the N-terminus of the alpha chain, which is derived from the carboxyl end of the proenzyme. The autoendoproteolytic cleavage occurs by a canonical serine protease mechanism, in which the side chain hydroxyl group of the serine supplies its oxygen atom to form the C-terminus of the beta chain, while the remainder of the serine residue undergoes an oxidative deamination to produce ammonia and the pyruvoyl prosthetic group on the alpha chain. During this reaction, the Ser that is part of the protease active site of the proenzyme becomes the pyruvoyl prosthetic group, which constitutes an essential element of the active site of the mature decarboxylase.

The protein localises to the cell membrane. It carries out the reaction a 1,2-diacyl-sn-glycero-3-phospho-L-serine + H(+) = a 1,2-diacyl-sn-glycero-3-phosphoethanolamine + CO2. Its pathway is phospholipid metabolism; phosphatidylethanolamine biosynthesis; phosphatidylethanolamine from CDP-diacylglycerol: step 2/2. Its function is as follows. Catalyzes the formation of phosphatidylethanolamine (PtdEtn) from phosphatidylserine (PtdSer). This Aliivibrio fischeri (strain ATCC 700601 / ES114) (Vibrio fischeri) protein is Phosphatidylserine decarboxylase proenzyme.